The sequence spans 404 residues: Nicotinate phosphoribosyltransferase (404 aa).

H224 is modified (phosphohistidine; by autocatalysis).

This sequence belongs to the NAPRTase family. Transiently phosphorylated on a His residue during the reaction cycle. Phosphorylation strongly increases the affinity for substrates and increases the rate of nicotinate D-ribonucleotide production. Dephosphorylation regenerates the low-affinity form of the enzyme, leading to product release.

It catalyses the reaction nicotinate + 5-phospho-alpha-D-ribose 1-diphosphate + ATP + H2O = nicotinate beta-D-ribonucleotide + ADP + phosphate + diphosphate. It functions in the pathway cofactor biosynthesis; NAD(+) biosynthesis; nicotinate D-ribonucleotide from nicotinate: step 1/1. Catalyzes the synthesis of beta-nicotinate D-ribonucleotide from nicotinate and 5-phospho-D-ribose 1-phosphate at the expense of ATP. The polypeptide is Nicotinate phosphoribosyltransferase (Photorhabdus laumondii subsp. laumondii (strain DSM 15139 / CIP 105565 / TT01) (Photorhabdus luminescens subsp. laumondii)).